We begin with the raw amino-acid sequence, 171 residues long: Small ribosomal subunit protein mS25 (171 aa).

The protein belongs to the mitochondrion-specific ribosomal protein mS25 family. Component of the mitochondrial ribosome small subunit (28S) which comprises a 12S rRNA and about 30 distinct proteins.

The protein resides in the mitochondrion. The protein is Small ribosomal subunit protein mS25 (Mrps25) of Mus musculus (Mouse).